A 101-amino-acid polypeptide reads, in one-letter code: 2-amino-4-ketopentanoate thiolase alpha subunit (101 aa).

It belongs to the OrtA family. Heterodimer with OrtB.

The enzyme catalyses D-alanine + acetyl-CoA = (2R)-2-amino-4-oxopentanoate + CoA. Involved in the ornithine fermentation pathway. Catalyzes the thiolytic cleavage of 2-amino-4-ketopentanoate (AKP) with coenzyme A (CoA) to form acetyl-CoA and alanine. It is strictly specific for AKP. In Unknown prokaryotic organism, this protein is 2-amino-4-ketopentanoate thiolase alpha subunit.